The sequence spans 256 residues: 2,3,4,5-tetrahydropyridine-2,6-dicarboxylate N-acetyltransferase (256 aa).

This sequence belongs to the transferase hexapeptide repeat family. DapH subfamily.

It carries out the reaction (S)-2,3,4,5-tetrahydrodipicolinate + acetyl-CoA + H2O = L-2-acetamido-6-oxoheptanedioate + CoA. It functions in the pathway amino-acid biosynthesis; L-lysine biosynthesis via DAP pathway; LL-2,6-diaminopimelate from (S)-tetrahydrodipicolinate (acetylase route): step 1/3. In terms of biological role, catalyzes the transfer of an acetyl group from acetyl-CoA to tetrahydrodipicolinate. This is 2,3,4,5-tetrahydropyridine-2,6-dicarboxylate N-acetyltransferase from Lactococcus lactis subsp. cremoris (strain MG1363).